The sequence spans 82 residues: NADH-ubiquinone oxidoreductase 9.5 kDa subunit (82 aa).

A helical transmembrane segment spans residues 25–43 (AYFYSCVIAGLGPVFLTVV).

The protein belongs to the complex I NDUFA3 subunit family. In terms of assembly, complex I is composed of about 40 different subunits.

The protein resides in the mitochondrion inner membrane. Its function is as follows. Accessory subunit of the mitochondrial membrane respiratory chain NADH dehydrogenase (Complex I), that is believed not to be involved in catalysis. Complex I functions in the transfer of electrons from NADH to the respiratory chain. The immediate electron acceptor for the enzyme is believed to be ubiquinone. This subunit binds ubiquinone. In Neurospora crassa (strain ATCC 24698 / 74-OR23-1A / CBS 708.71 / DSM 1257 / FGSC 987), this protein is NADH-ubiquinone oxidoreductase 9.5 kDa subunit (nuo9.5).